The following is a 481-amino-acid chain: MSAGPAKNPSVVTRFAPSPTGFLHIGGARTALFNWLFARHNGGQFQLRIEDTDRVRSTKEAIDAIIDGMRWLGLDWDGDITYQFERAPRHTEVAEELLKAGKAYKCFATAEELEAMRAEQRAKKQPQRYDGRWRDRDPSEAPAGAPYVVRLKAEQEGETTLHDLVQGDVTVKNAELDDMILLRSDGTPTYMLAVVVDDHDMGVNHVIRGDDHLNNTFRQLGIIRAMNWDAPQYAHIPLIHGADGAKLSKRHGALGVEAYRDDFGYLPEAICNYLLRLGWGHGDDEIITREQAIEWFDLTSVGRSPSRFDFKKLENINGHYIREADDQRLTDLVKPRVEKTLEQGLSSTEQALLLQAMPFLKPRAKNLNELAENSLFLFEKRPLKLEEKAAKQLENTSGSLLAILRKTLGDLPAWDSESLEKALHDVAEQADLKMGKVAQPLRAALTGRTVSPGIFDVMILLGQDESLARLDDQLSLSPTHS.

A 'HIGH' region motif is present at residues 17-27 (PSPTGFLHIGG). The segment covering 118–139 (AEQRAKKQPQRYDGRWRDRDPS) has biased composition (basic and acidic residues). The disordered stretch occupies residues 118–143 (AEQRAKKQPQRYDGRWRDRDPSEAPA). The 'KMSKS' region motif lies at 246 to 250 (KLSKR). Position 249 (lysine 249) interacts with ATP.

Belongs to the class-I aminoacyl-tRNA synthetase family. Glutamate--tRNA ligase type 1 subfamily. Monomer.

It is found in the cytoplasm. It catalyses the reaction tRNA(Glu) + L-glutamate + ATP = L-glutamyl-tRNA(Glu) + AMP + diphosphate. In terms of biological role, catalyzes the attachment of glutamate to tRNA(Glu) in a two-step reaction: glutamate is first activated by ATP to form Glu-AMP and then transferred to the acceptor end of tRNA(Glu). The sequence is that of Glutamate--tRNA ligase 2 from Zymomonas mobilis subsp. mobilis (strain ATCC 31821 / ZM4 / CP4).